The sequence spans 145 residues: MRVVLQKVNHAAVSIDDEVVGKIGLGYFLLVGFAPDDTEEKLNYLVHKITNLRVFEDENGKMNKGLRDVNGAILSVSQFTLYADTKHGNRPGFSQAASPEIAEPLYDLFNQKLAATGIPVETGHFGAMMKIDLENDGPTTIIYER.

The Gly-cisPro motif, important for rejection of L-amino acids signature appears at 137-138; sequence GP.

It belongs to the DTD family. Homodimer.

It is found in the cytoplasm. It carries out the reaction glycyl-tRNA(Ala) + H2O = tRNA(Ala) + glycine + H(+). It catalyses the reaction a D-aminoacyl-tRNA + H2O = a tRNA + a D-alpha-amino acid + H(+). Functionally, an aminoacyl-tRNA editing enzyme that deacylates mischarged D-aminoacyl-tRNAs. Also deacylates mischarged glycyl-tRNA(Ala), protecting cells against glycine mischarging by AlaRS. Acts via tRNA-based rather than protein-based catalysis; rejects L-amino acids rather than detecting D-amino acids in the active site. By recycling D-aminoacyl-tRNA to D-amino acids and free tRNA molecules, this enzyme counteracts the toxicity associated with the formation of D-aminoacyl-tRNA entities in vivo and helps enforce protein L-homochirality. The sequence is that of D-aminoacyl-tRNA deacylase from Limosilactobacillus reuteri (strain DSM 20016) (Lactobacillus reuteri).